The chain runs to 247 residues: Probable transcriptional regulatory protein DvMF_3201 (247 aa).

Residues 1–21 form a disordered region; that stretch reads MAGHSKWANIQHRKGRQDAKR.

Belongs to the TACO1 family.

It localises to the cytoplasm. The chain is Probable transcriptional regulatory protein DvMF_3201 from Nitratidesulfovibrio vulgaris (strain DSM 19637 / Miyazaki F) (Desulfovibrio vulgaris).